Here is a 216-residue protein sequence, read N- to C-terminus: Peptide deformylase 1 (216 aa).

2 residues coordinate Fe cation: Cys-135 and His-177. Residue Glu-178 is part of the active site. Fe cation is bound at residue His-181.

Belongs to the polypeptide deformylase family. It depends on Fe(2+) as a cofactor.

The catalysed reaction is N-terminal N-formyl-L-methionyl-[peptide] + H2O = N-terminal L-methionyl-[peptide] + formate. Its function is as follows. Removes the formyl group from the N-terminal Met of newly synthesized proteins. Requires at least a dipeptide for an efficient rate of reaction. N-terminal L-methionine is a prerequisite for activity but the enzyme has broad specificity at other positions. This Streptomyces avermitilis (strain ATCC 31267 / DSM 46492 / JCM 5070 / NBRC 14893 / NCIMB 12804 / NRRL 8165 / MA-4680) protein is Peptide deformylase 1.